Consider the following 256-residue polypeptide: Imidazole glycerol phosphate synthase subunit HisF (256 aa).

Catalysis depends on residues Asp-13 and Asp-132.

Belongs to the HisA/HisF family. In terms of assembly, heterodimer of HisH and HisF.

It is found in the cytoplasm. The catalysed reaction is 5-[(5-phospho-1-deoxy-D-ribulos-1-ylimino)methylamino]-1-(5-phospho-beta-D-ribosyl)imidazole-4-carboxamide + L-glutamine = D-erythro-1-(imidazol-4-yl)glycerol 3-phosphate + 5-amino-1-(5-phospho-beta-D-ribosyl)imidazole-4-carboxamide + L-glutamate + H(+). Its pathway is amino-acid biosynthesis; L-histidine biosynthesis; L-histidine from 5-phospho-alpha-D-ribose 1-diphosphate: step 5/9. Functionally, IGPS catalyzes the conversion of PRFAR and glutamine to IGP, AICAR and glutamate. The HisF subunit catalyzes the cyclization activity that produces IGP and AICAR from PRFAR using the ammonia provided by the HisH subunit. The sequence is that of Imidazole glycerol phosphate synthase subunit HisF from Leptospira interrogans serogroup Icterohaemorrhagiae serovar copenhageni (strain Fiocruz L1-130).